A 314-amino-acid polypeptide reads, in one-letter code: MLRIYAPASSANISVGFDTLGAAISPIDGSLLGDVVQIESISSGFELESAGYFVRKLPKEPQKNIVYQAYVLFSEQLKLRGANVKPLRLTLEKNMPIGSGLGSSACSIVAALVALNQFHNEPFSKMELLEMMGELEGRISGSIHYDNVAPCYLGGVQFMVQSLGNICQKLPFFDNWYWVLAYPGIEVSTAEARAILPKSYTRQNVIAHGRHLGGFVHACHTHQENLAAIMMKDVIAEPYRESLLPNFAEVKQATRDLGALATGISGSGPTIFSIAPDLQTAIKLSSYLESHYLQNNEGFVHVCKVDNEGTREIK.

ATP is bound at residue 96–106; sequence PIGSGLGSSAC.

This sequence belongs to the GHMP kinase family. Homoserine kinase subfamily.

The protein localises to the cytoplasm. It carries out the reaction L-homoserine + ATP = O-phospho-L-homoserine + ADP + H(+). Its pathway is amino-acid biosynthesis; L-threonine biosynthesis; L-threonine from L-aspartate: step 4/5. Functionally, catalyzes the ATP-dependent phosphorylation of L-homoserine to L-homoserine phosphate. This Haemophilus influenzae (strain 86-028NP) protein is Homoserine kinase.